A 210-amino-acid polypeptide reads, in one-letter code: Large ribosomal subunit protein uL4 (210 aa).

Positions 57–78 (VSGGGAKPWKQKGTGRARAGSN) are disordered.

It belongs to the universal ribosomal protein uL4 family. Part of the 50S ribosomal subunit.

Functionally, one of the primary rRNA binding proteins, this protein initially binds near the 5'-end of the 23S rRNA. It is important during the early stages of 50S assembly. It makes multiple contacts with different domains of the 23S rRNA in the assembled 50S subunit and ribosome. In terms of biological role, forms part of the polypeptide exit tunnel. The polypeptide is Large ribosomal subunit protein uL4 (Desulfovibrio desulfuricans (strain ATCC 27774 / DSM 6949 / MB)).